A 414-amino-acid chain; its full sequence is Cell division protein FtsA (414 aa).

Belongs to the FtsA/MreB family. Self-interacts. Interacts with FtsZ.

The protein resides in the cell inner membrane. Cell division protein that is involved in the assembly of the Z ring. May serve as a membrane anchor for the Z ring. In Neisseria meningitidis serogroup B (strain ATCC BAA-335 / MC58), this protein is Cell division protein FtsA.